The following is a 151-amino-acid chain: Sigma factor binding protein 1, chloroplastic (151 aa).

Residues M1–S13 are compositionally biased toward low complexity. Disordered regions lie at residues M1 to K41 and T66 to E93. The transit peptide at M1–C54 directs the protein to the chloroplast. The Bipartite nuclear localization signal motif lies at K16–K32. The short motif at F58 to G67 is the VQ element.

In terms of assembly, interacts with the sigma factor SIGA in chloroplast. Interacts with WRKY25 and WRKY33 in the nucleus. In terms of tissue distribution, expressed in leaves and roots, but not in flowers.

The protein localises to the plastid. The protein resides in the chloroplast. It is found in the nucleus. Functionally, contributes to plant defense. May regulate chloroplast metabolism upon infection with pathogens such as Pseudomonas syringae. Functions as activator of WRKY33 in plant defense against necrotrophic pathogens by stimulating the DNA-binding activity of WRKY33. The sequence is that of Sigma factor binding protein 1, chloroplastic (SIB1) from Arabidopsis thaliana (Mouse-ear cress).